The primary structure comprises 396 residues: MMLIGEALIGEAPELAHVDLMIGDKEGPVGQAFATGMTQLSAGHTPVLSVIRPNLPTKPSTLIVPKVTVKGMDQASQIFGPAQAAVSKAVADAVEEGLIPKEKAEDLVIIASVFIHPQAVDYNRIYRYNYGATKLALKRALDGFPDIDTVLHEKDRAAHAVMGFKISKLWDAPYLQVALDNPNLPVILNIIKQLPKSDHLILEAGTPLIKRYGVDVISKIREVRPDAFIVADLKTLDTGNLEARMVADATADAIVVSALAPIATLNKVIEEAHKTGIYAVMDTLNTPDPVAVLEQLDVLPDVVELHRAIDIEGTAHAWGSIEGIKALAVKRSSKVLVAVAGGVRVDTISDALGAGADILVVGRAITNSKDVRQAADRFIEGLNKPEIDQFRIMTDF.

Residues 1–161 (MMLIGEALIG…HEKDRAAHAV (161 aa)) form a formaldehyde-activating enzyme region. The active-site Proton donor is the His17. 5 residues coordinate substrate: Asp19, Leu48, Lys66, Thr68, and Gln83. Residues 162–396 (MGFKISKLWD…IDQFRIMTDF (235 aa)) are 3-hexulose-6-phosphate synthase.

It in the N-terminal section; belongs to the formaldehyde-activating enzyme family. In the C-terminal section; belongs to the HPS/KGPDC family. HPS subfamily.

It catalyses the reaction 5,6,7,8-tetrahydromethanopterin + formaldehyde = 5,10-methylenetetrahydromethanopterin + H2O. The catalysed reaction is D-ribulose 5-phosphate + formaldehyde = D-arabino-hex-3-ulose 6-phosphate. It functions in the pathway carbohydrate biosynthesis; D-ribose 5-phosphate biosynthesis. Catalyzes the condensation of formaldehyde with tetrahydromethanopterin (H(4)MPT) to 5,10-methylenetetrahydromethanopterin. Functionally, catalyzes the reversible formation of ribulose-5-phosphate and formaldehyde from 3-hexulose-6-phosphate. The sequence is that of Bifunctional enzyme Fae/Hps from Methanococcoides burtonii (strain DSM 6242 / NBRC 107633 / OCM 468 / ACE-M).